A 234-amino-acid polypeptide reads, in one-letter code: Leucyl/phenylalanyl-tRNA--protein transferase (234 aa).

It belongs to the L/F-transferase family.

The protein localises to the cytoplasm. The catalysed reaction is N-terminal L-lysyl-[protein] + L-leucyl-tRNA(Leu) = N-terminal L-leucyl-L-lysyl-[protein] + tRNA(Leu) + H(+). The enzyme catalyses N-terminal L-arginyl-[protein] + L-leucyl-tRNA(Leu) = N-terminal L-leucyl-L-arginyl-[protein] + tRNA(Leu) + H(+). It catalyses the reaction L-phenylalanyl-tRNA(Phe) + an N-terminal L-alpha-aminoacyl-[protein] = an N-terminal L-phenylalanyl-L-alpha-aminoacyl-[protein] + tRNA(Phe). Functionally, functions in the N-end rule pathway of protein degradation where it conjugates Leu, Phe and, less efficiently, Met from aminoacyl-tRNAs to the N-termini of proteins containing an N-terminal arginine or lysine. The polypeptide is Leucyl/phenylalanyl-tRNA--protein transferase (Klebsiella pneumoniae (strain 342)).